The sequence spans 352 residues: Holliday junction branch migration complex subunit RuvB (352 aa).

Positions 4–185 (PDRLISAVSG…FGIVQRLEFY (182 aa)) are large ATPase domain (RuvB-L). ATP-binding positions include Ile-24, Arg-25, Gly-66, Lys-69, Thr-70, Thr-71, 132–134 (EDF), Arg-175, Tyr-185, and Arg-222. Thr-70 is a Mg(2+) binding site. A small ATPAse domain (RuvB-S) region spans residues 186 to 256 (NVEDLATIVS…IADKALNLLD (71 aa)). Residues 259 to 352 (ERGFDHLDRR…TDLFTSEDGN (94 aa)) are head domain (RuvB-H). Arg-295, Arg-314, and Arg-319 together coordinate DNA.

It belongs to the RuvB family. Homohexamer. Forms an RuvA(8)-RuvB(12)-Holliday junction (HJ) complex. HJ DNA is sandwiched between 2 RuvA tetramers; dsDNA enters through RuvA and exits via RuvB. An RuvB hexamer assembles on each DNA strand where it exits the tetramer. Each RuvB hexamer is contacted by two RuvA subunits (via domain III) on 2 adjacent RuvB subunits; this complex drives branch migration. In the full resolvosome a probable DNA-RuvA(4)-RuvB(12)-RuvC(2) complex forms which resolves the HJ.

It is found in the cytoplasm. The catalysed reaction is ATP + H2O = ADP + phosphate + H(+). In terms of biological role, the RuvA-RuvB-RuvC complex processes Holliday junction (HJ) DNA during genetic recombination and DNA repair, while the RuvA-RuvB complex plays an important role in the rescue of blocked DNA replication forks via replication fork reversal (RFR). RuvA specifically binds to HJ cruciform DNA, conferring on it an open structure. The RuvB hexamer acts as an ATP-dependent pump, pulling dsDNA into and through the RuvAB complex. RuvB forms 2 homohexamers on either side of HJ DNA bound by 1 or 2 RuvA tetramers; 4 subunits per hexamer contact DNA at a time. Coordinated motions by a converter formed by DNA-disengaged RuvB subunits stimulates ATP hydrolysis and nucleotide exchange. Immobilization of the converter enables RuvB to convert the ATP-contained energy into a lever motion, pulling 2 nucleotides of DNA out of the RuvA tetramer per ATP hydrolyzed, thus driving DNA branch migration. The RuvB motors rotate together with the DNA substrate, which together with the progressing nucleotide cycle form the mechanistic basis for DNA recombination by continuous HJ branch migration. Branch migration allows RuvC to scan DNA until it finds its consensus sequence, where it cleaves and resolves cruciform DNA. This Pseudomonas aeruginosa (strain LESB58) protein is Holliday junction branch migration complex subunit RuvB.